Consider the following 338-residue polypeptide: L-serine dehydratase (338 aa).

The residue at position 39 (Lys-39) is an N6-(pyridoxal phosphate)lysine.

The protein belongs to the serine/threonine dehydratase family. It depends on pyridoxal 5'-phosphate as a cofactor.

The protein localises to the cytoplasm. The enzyme catalyses L-serine = pyruvate + NH4(+). Its pathway is carbohydrate biosynthesis; gluconeogenesis. The sequence is that of L-serine dehydratase (SDL1) from Saccharomyces cerevisiae (strain RM11-1a) (Baker's yeast).